A 598-amino-acid polypeptide reads, in one-letter code: Elongation factor 4 (598 aa).

Residues 2–184 (DNVRNFAIIA…AIITKLPAPQ (183 aa)) enclose the tr-type G domain. Residues 14–19 (DHGKST) and 131–134 (NKVD) contribute to the GTP site.

This sequence belongs to the TRAFAC class translation factor GTPase superfamily. Classic translation factor GTPase family. LepA subfamily.

Its subcellular location is the cell membrane. The enzyme catalyses GTP + H2O = GDP + phosphate + H(+). Its function is as follows. Required for accurate and efficient protein synthesis under certain stress conditions. May act as a fidelity factor of the translation reaction, by catalyzing a one-codon backward translocation of tRNAs on improperly translocated ribosomes. Back-translocation proceeds from a post-translocation (POST) complex to a pre-translocation (PRE) complex, thus giving elongation factor G a second chance to translocate the tRNAs correctly. Binds to ribosomes in a GTP-dependent manner. This is Elongation factor 4 from Wolbachia sp. subsp. Brugia malayi (strain TRS).